Reading from the N-terminus, the 506-residue chain is MIKSLLLLISIIIGIVISQEGAYPPAGIYVGLSSNFLTTEGESLTTYAQNELLSMSLPDQSGSSSKASYTFTSFKLGLTLDNIFYNQLQTDVYQIGWETISFELQWNYHICANAIFNPCENGNIQVGTVSGASAAVASNVYVEFNSTSTSIIATNTTMAFDQGAVQVNVHCSNAICVIPVSDIANEVAQNFVTELTNGITKAINEQVPTIEALFTPIKQIPMTLSNGDSFWINLEGTLVEESNPTADLPTITAALNGGVILENTDGNFVYPSQIPSYIPTDSQLESFTSDYSIVVTGFFIESLFDAVFASALPMTINPSQVPSASPVQLNTSDGFFSGVAPGLSQYPNLGIQVNCYSPVTPLVSINSSAISLFNLELSADFIILNGDNPFTAFTVLFTIDASLSTEILTDSPSTFSLNSTLASMTPNATIVTSTIGSVDATGFVQLMQMVQGVIKLPSPAYSVPSKYSMSNVELQLGTQVIQITFDLIDSSLLEKQKIIKKSINFN.

The first 18 residues, 1 to 18 (MIKSLLLLISIIIGIVIS), serve as a signal peptide directing secretion. Asn-145, Asn-155, Asn-330, Asn-366, Asn-418, and Asn-427 each carry an N-linked (GlcNAc...) asparagine glycan.

This sequence belongs to the UPF0522 family.

It is found in the secreted. The sequence is that of UPF0522 protein A from Dictyostelium discoideum (Social amoeba).